Reading from the N-terminus, the 365-residue chain is Pyridoxal reductase, chloroplastic (365 aa).

The transit peptide at 1–15 (MALTLSTTKTFTNIN) directs the protein to the chloroplast. The Proton donor role is filled by Tyr94.

The protein belongs to the aldo/keto reductase family. In terms of assembly, monomer. As to expression, expressed in cotyledons, embryos, flowers, shoots, roots and seeds.

The protein resides in the plastid. Its subcellular location is the chloroplast. It catalyses the reaction pyridoxine + NADP(+) = pyridoxal + NADPH + H(+). The protein operates within cofactor degradation; B6 vitamer degradation; pyridoxal from pyridoxine (dehydrogenase route): step 1/1. In terms of biological role, catalyzes the reduction of pyridoxal (PL) with NADPH and oxidation of pyridoxine (PN) with NADP(+). Involved in the PLP salvage pathway. The sequence is that of Pyridoxal reductase, chloroplastic (PLR1) from Arabidopsis thaliana (Mouse-ear cress).